We begin with the raw amino-acid sequence, 364 residues long: Doublecortin domain-containing protein 2C (364 aa).

Doublecortin domains are found at residues 16 to 98 (KTIV…LDYI) and 136 to 217 (RHIN…FPYW). A disordered region spans residues 233 to 255 (VEKNSQRKKKVDSKGKEPCKYDG).

Expressed in testis and spermatozoa (at protein level).

The protein localises to the cell projection. It is found in the cilium. It localises to the flagellum. Its subcellular location is the cytoplasm. The protein is Doublecortin domain-containing protein 2C of Homo sapiens (Human).